The sequence spans 450 residues: Serine/threonine-protein kinase SSN3 (450 aa).

Residues 40–393 (YRIIGFISSG…AAQALQSPFF (354 aa)) enclose the Protein kinase domain. Residues 46 to 54 (ISSGTYGRV) and lysine 71 contribute to the ATP site. The Proton acceptor role is filled by aspartate 173. 2 disordered regions span residues 307 to 341 (ASSHHNHHSHHHPHHHHGHYGSRNPPPPGGSNLEK) and 418 to 450 (QDDNDIRTSSLPGTKRSGLPDDSLIRPAKRQKE). The span at 310–326 (HHNHHSHHHPHHHHGHY) shows a compositional bias: basic residues.

This sequence belongs to the protein kinase superfamily. CMGC Ser/Thr protein kinase family. CDC2/CDKX subfamily. In terms of assembly, component of the SRB8-11 complex, a regulatory module of the Mediator complex. Interacts with SSN8/FCC1. Mg(2+) serves as cofactor.

It is found in the nucleus. It catalyses the reaction L-seryl-[protein] + ATP = O-phospho-L-seryl-[protein] + ADP + H(+). It carries out the reaction L-threonyl-[protein] + ATP = O-phospho-L-threonyl-[protein] + ADP + H(+). The catalysed reaction is [DNA-directed RNA polymerase] + ATP = phospho-[DNA-directed RNA polymerase] + ADP + H(+). In terms of biological role, component of the SRB8-11 complex. The SRB8-11 complex is a regulatory module of the Mediator complex which is itself involved in regulation of basal and activated RNA polymerase II-dependent transcription. The SRB8-11 complex may be involved in the transcriptional repression of a subset of genes regulated by Mediator. It may inhibit the association of the Mediator complex with RNA polymerase II to form the holoenzyme complex. The SRB8-11 complex phosphorylates the C-terminal domain (CTD) of the largest subunit of RNA polymerase II. Required for normal growth and secondary metabolism. This Gibberella moniliformis (Maize ear and stalk rot fungus) protein is Serine/threonine-protein kinase SSN3 (SSN3).